Reading from the N-terminus, the 357-residue chain is GTPase Obg (357 aa).

One can recognise an Obg domain in the interval methionine 1–leucine 159. One can recognise an OBG-type G domain in the interval alanine 160–glutamate 343. Residues glycine 166–serine 173, phenylalanine 191–tyrosine 195, aspartate 213–glycine 216, asparagine 293–aspartate 296, and serine 324–valine 326 contribute to the GTP site. Serine 173 and threonine 193 together coordinate Mg(2+).

Belongs to the TRAFAC class OBG-HflX-like GTPase superfamily. OBG GTPase family. Monomer. It depends on Mg(2+) as a cofactor.

It localises to the cytoplasm. In terms of biological role, an essential GTPase which binds GTP, GDP and possibly (p)ppGpp with moderate affinity, with high nucleotide exchange rates and a fairly low GTP hydrolysis rate. Plays a role in control of the cell cycle, stress response, ribosome biogenesis and in those bacteria that undergo differentiation, in morphogenesis control. The sequence is that of GTPase Obg from Xylella fastidiosa (strain M12).